The sequence spans 885 residues: MSLFKARDWWSTVLGEKEEFDQGCLCLADVDNSGNGHDKIIVGSFMGYLRIFSPHSVKAGGGPQAEDLLLEVHLRDPVLQVEVGKFVSGTEMLHLAVLHSRKLCVYSVSGTLGNVEHGNQYQIKLMYEHHLQRTACNMTYGPFGGVKGRDLICIQSLDGMLMVFEQESYAFGRFLPGFLLPGPLAYSPRTDSFITVSSCRQVESYKYQVLAFATDADKKQEMEQQKLGSGKRLVVDWTLNIGEQALDICIFPLNQSASSVFVLGERNFFCLKDNGQIRFMKKLGYNPSCFLPYCSVSEGTINTLIGNHNHMLHIYQDVTLKWATQLPHVPVAVRVGCFHDLKGVIVTLSDDGHLQCSYLGTDPSLFQAPKVESRELNYDELDVELKELQKIIKDVKLQGVWPLTEQEDDLKVSASVSSTLDSVSQATNVEPGADSVPSITVKITLQNRVVLQKVKLSIYVQPPLQLTCDQFTFDFTVPDMTSSVAFSVYLKRNYTPSELEGNAVVSYSRPTDRNPDGIPRVVQCKFRLPLKLICLPGQPSKTASHKLTIDTNKSPVSLLGLFPDFANPSDDDQVNVMGFRLLGGARVTLLASRTSQRYRIQSEQFEDLWLITNELILRLQEHFEKQGTKDFSCSFSGCVPLQEYFELIDHHFELRINGKKLEELLSERAVQFRAIQRRLLTRFRDKTPAPLQHLDTLLDGTYKQVIALADAIEENQDRLLQSFSGLKSATHLLILLIRLWQRLSADQTAILEAAFLPLQEDTQELGWEETVDAAIAYLLKTCLSKSSKEQALNLSSQLNIPKDTSRLKKHITLLCDRLAKGGRLCVSTDAAAPQAMVVPGGCTPIPESDLEERSLDDSTELFTNHKHLMTEPPMPEVSARQGVLE.

Positions 1 to 406 (MSLFKARDWW…LQGVWPLTEQ (406 aa)) are seven-bladed beta-propeller. The interaction with LZTL1 stretch occupies residues 684–764 (RDKTPAPLQH…FLPLQEDTQE (81 aa)).

In terms of assembly, part of BBSome complex, that contains BBS1, BBS2, BBS4, BBS5, BBS7, BBS8/TTC8, BBS9 and BBIP10. Interacts with LZTL1; the interaction mediates the association of LZTL1 with the BBsome complex and regulates BBSome ciliary trafficking.

Its subcellular location is the cell projection. The protein resides in the cilium membrane. It is found in the cytoplasm. It localises to the cytoskeleton. The protein localises to the microtubule organizing center. Its subcellular location is the centrosome. The protein resides in the centriolar satellite. Functionally, the BBSome complex is thought to function as a coat complex required for sorting of specific membrane proteins to the primary cilia. The BBSome complex is required for ciliogenesis but is dispensable for centriolar satellite function. This ciliogenic function is mediated in part by the Rab8 GDP/GTP exchange factor, which localizes to the basal body and contacts the BBSome. Rab8(GTP) enters the primary cilium and promotes extension of the ciliary membrane. Firstly the BBSome associates with the ciliary membrane and binds to RAB3IP/Rabin8, the guanosyl exchange factor (GEF) for Rab8 and then the Rab8-GTP localizes to the cilium and promotes docking and fusion of carrier vesicles to the base of the ciliary membrane. Required for proper BBSome complex assembly and its ciliary localization. The protein is Protein PTHB1 (Bbs9) of Mus musculus (Mouse).